A 379-amino-acid chain; its full sequence is Alcohol dehydrogenase class-3 (379 aa).

The residue at position 2 (A2) is an N-acetylalanine. C47 serves as a coordination point for Zn(2+). Residue H48 coordinates NAD(+). The an alcohol site is built by T49 and H69. The Zn(2+) site is built by H69, E70, C99, C102, C105, C113, and C177. NAD(+) contacts are provided by residues 202 to 207, D226, K231, I272, 295 to 297, 320 to 322, and R372; these read GLGTVG, VGV, and TAF.

The protein belongs to the zinc-containing alcohol dehydrogenase family. Class-III subfamily. Homodimer. Zn(2+) serves as cofactor. As to expression, ubiquitous.

The protein resides in the cytoplasm. It catalyses the reaction a primary alcohol + NAD(+) = an aldehyde + NADH + H(+). The enzyme catalyses a secondary alcohol + NAD(+) = a ketone + NADH + H(+). It carries out the reaction S-(hydroxymethyl)glutathione + NADP(+) = S-formylglutathione + NADPH + H(+). The catalysed reaction is S-(hydroxymethyl)glutathione + NAD(+) = S-formylglutathione + NADH + H(+). It catalyses the reaction S-nitrosoglutathione + NADH + H(+) = S-(hydroxysulfenamide)glutathione + NAD(+). With respect to regulation, repressed by thiol-modifying agents N-ethylmaleimide (NEM) and 5,5-dithio-bis-(2-nitrobenzoic acid) (DTNB), as well as by methyl methanethiosulfonate (MMTS) in a dose-dependent manner. Inhibited by hydrogen peroxide H(2)O(2). Its function is as follows. Alcohol dehydrogenase catalyzing the reduction of nitrosoglutathione. Can also use long-chain alcohols including cinnamyl alcohol and geraniol, and, to a lower extent, octanol. Plays a central role in formaldehyde detoxification. Not able to use ethanol (EtOH) as substrate. The sequence is that of Alcohol dehydrogenase class-3 from Arabidopsis thaliana (Mouse-ear cress).